Here is a 1062-residue protein sequence, read N- to C-terminus: MNISEDVLSTGSSLASQVHAAAVNGDKGALQRLIVGNSALRDKEDRFGRTPLMYCVLADRVDCADALLKAGADVNKTDHSRRTALHLAAQKGNYRFMKLLLTRRANWMQKDLEEMTPLHLSTRHRSPKCLALLLKFMAPGEVDTQDKNKQTALHWSAYYNNPEHAKLLIKHDSNIGIPDVEGKIPLHWAANHKDPSAVHTVRCILDAAPTESLLNWQDYEGRTPLHFAVADGNLTVVDVLTSYESCNITSYDNLFRTPLHWAALLGHAQIVHLLLERNKSGTIPSDSQGATPLHYAAQSNFAETVKVFLQHPSVKDDSDLEGRTSFMWAAGKGNDDVLRTMLSLKSDIDINMSDKYGGTALHAAALSGHVSTVKLLLDNDAQVDATDVMKHTPLFRACEMGHRDVIQTLIKGGARVDLVDQDGHSLLHWAALGGNADVCQILIENKINPNVQDYAGRTPLQCAAYGGYINCMAVLMENNADPNIQDKEGRTALHWSCNNGYLDAIKLLLDFAAFPNQMENNEERYTPLDYALLGERHEVIQFMLEHGALSIAAIQDIAAFKIQAVYKGYKVRKAFRDRKNLLMKHEQLRKDAAAKKREEENKRKEAEQQKGQLDTDPPRSHCSSSAPVLPCPPSPQNEGSKQDATPSKQPPASHTVQSPDPEHSRLPGRCPGRASQGDSSIDLQGTASRKPSETPIEHCRGPSACVHPRSWEGGNSSKNQGTSSVEKRRGETNGKHRRCEEGPSSARQPLCTGSGRPAEKGEDSSPAVASASQQDHPRKPNKRQDRAARPRGASQKRRTHQLRDRCSPAGSSRPGSAKGEVACADQSSLHRHTPRSKVTQDKLIGGVSSGLPLSTEASRSGCKQLYEDICASPETGVAHGPPPGQCMNIHLLPVEQRLLIIQRERSRKELFRRKNKAAAVIQRAWRSYQLRKHLSRLLHLKQLGAREVLRCTQVCTALLLQVWRKELELKFPKSISVSRTSKSPSKGSSATKYARHSVLRQIYGCSQEGKGHHPIKSSKAPAVLHLSSVNSLQSIHLDNSGRSKKFSYNLQPSSQSKNKPKL.

ANK repeat units lie at residues 13–42, 47–76, 80–110, 113–144, 148–177, 181–213, 220–250, 254–283, 288–317, 321–350, 356–385, 389–418, 422–451, 455–484, 488–517, and 523–553; these read SLAS…ALRD, FGRT…DVNK, SRRT…WMQK, EEMT…EVDT, NKQT…NIGI, EGKI…TESL, EGRT…NITS, LFRT…SGTI, QGAT…VKDD, EGRT…DIDI, YGGT…QVDA, MKHT…RVDL, DGHS…NPNV, AGRT…DPNI, EGRT…FPNQ, and ERYT…SIAA. Asn75 is modified (3-hydroxyasparagine). Residues 490-498 carry the D-box 1 motif; that stretch reads RTALHWSCN. Residues 555–584 enclose the IQ 1 domain; it reads QDIAAFKIQAVYKGYKVRKAFRDRKNLLMK. Residues 589–608 are compositionally biased toward basic and acidic residues; the sequence is RKDAAAKKREEENKRKEAEQ. Residues 589 to 849 form a disordered region; it reads RKDAAAKKRE…QDKLIGGVSS (261 aa). 2 stretches are compositionally biased toward polar residues: residues 636–658 and 676–689; these read QNEG…TVQS and QGDS…TASR. The segment covering 690-700 has biased composition (basic and acidic residues); it reads KPSETPIEHCR. Polar residues predominate over residues 713–724; sequence GGNSSKNQGTSS. Basic and acidic residues-rich tracts occupy residues 725–741 and 775–788; these read VEKR…RCEE and DHPR…DRAA. A D-box 2 motif is present at residues 907–915; that stretch reads RKELFRRKN. One can recognise an IQ 2 domain in the interval 914–943; sequence KNKAAAVIQRAWRSYQLRKHLSRLLHLKQL. Residues 1042-1062 form a disordered region; the sequence is RSKKFSYNLQPSSQSKNKPKL. The segment covering 1046 to 1062 has biased composition (polar residues); sequence FSYNLQPSSQSKNKPKL.

As to quaternary structure, interacts with microtubules. Interacts with NPHP1. Interacts with DVL1, PRICKLE (PRICKLE1 or PRICKLE2) and Strabismus (VANGL1 or VANGL2). Binds calmodulin via its IQ domains. Interacts with APC2. Interacts with alpha-, beta-, and gamma-catenin. Interacts with N-cadherin (CDH2). Interacts with NPHP3. Interacts with IQCB1; the interaction likely requires additional interactors. Component of a complex containing at least ANKS6, INVS, NEK8 and NPHP3. ANKS6 may organize complex assembly by linking INVS and NPHP3 to NEK8 and INVS may target the complex to the proximal ciliary axoneme. Post-translationally, may be ubiquitinated via its interaction with APC2. In terms of processing, hydroxylated at Asn-75, most probably by HIF1AN. In terms of tissue distribution, strongly expressed in the primary cilia of renal cells, especially in the varicosities, swellings observed in the cilia. Localizes in the node monocilia and in other 9+0 monocilia, including those of kidney epithelial cells and the pituitary gland, but it does not localize to 9+2 cilia (at protein level). In adult, it is expressed at high level in liver and kidney. Weakly or not expressed in other tissues.

It localises to the cytoplasm. The protein localises to the cytoskeleton. The protein resides in the membrane. Its subcellular location is the nucleus. It is found in the perinuclear region. It localises to the spindle. Functionally, required for normal renal development and establishment of left-right axis. Probably acts as a molecular switch between different Wnt signaling pathways. Inhibits the canonical Wnt pathway by targeting cytoplasmic disheveled (DVL1) for degradation by the ubiquitin-proteasome. This suggests that it is required in renal development to oppose the repression of terminal differentiation of tubular epithelial cells by Wnt signaling. Involved in the organization of apical junctions in kidney cells together with NPHP1, NPHP4 and RPGRIP1L/NPHP8. Does not seem to be strictly required for ciliogenesis. The protein is Inversin (Invs) of Mus musculus (Mouse).